The chain runs to 362 residues: 3-isopropylmalate dehydrogenase (362 aa).

77–88 (GPKWGTGSVRPE) is an NAD(+) binding site. The substrate site is built by Arg95, Arg105, Arg134, and Asp223. Residues Asp223, Asp248, and Asp252 each contribute to the Mg(2+) site. 287–298 (GSAPDLPKGKVN) is an NAD(+) binding site.

It belongs to the isocitrate and isopropylmalate dehydrogenases family. In terms of assembly, homodimer. The cofactor is Mg(2+). Mn(2+) serves as cofactor.

It is found in the cytoplasm. The catalysed reaction is (2R,3S)-3-isopropylmalate + NAD(+) = 4-methyl-2-oxopentanoate + CO2 + NADH. The protein operates within amino-acid biosynthesis; L-leucine biosynthesis; L-leucine from 3-methyl-2-oxobutanoate: step 3/4. Catalyzes the oxidation of 3-carboxy-2-hydroxy-4-methylpentanoate (3-isopropylmalate) to 3-carboxy-4-methyl-2-oxopentanoate. The product decarboxylates to 4-methyl-2 oxopentanoate. In Zygosaccharomyces rouxii (strain ATCC 2623 / CBS 732 / NBRC 1130 / NCYC 568 / NRRL Y-229), this protein is 3-isopropylmalate dehydrogenase (LEU2).